The primary structure comprises 352 residues: Transcription factor BHLH156 (352 aa).

The tract at residues 59–141 (GGDDDDNGGV…RSKTIVSERK (83 aa)) is disordered. The segment at 130–143 (RDRSKTIVSERKRR) is basic motif. In terms of domain architecture, bHLH spans 130–179 (RDRSKTIVSERKRRVRMKEKLYELRALVPNITKMDKASIIADAVVYVKDL). The helix-loop-helix motif stretch occupies residues 144–179 (VRMKEKLYELRALVPNITKMDKASIIADAVVYVKDL). The segment at 194 to 216 (EEARPIRPPPPSAAAQRPQRQPR) is disordered. The span at 206–216 (AAAQRPQRQPR) shows a compositional bias: low complexity.

This sequence belongs to the bHLH protein family. In terms of assembly, forms homodimers. Interacts with IRO2 in the nucleus. Expressed in the meristematic zone of lateral and primary roots.

The protein resides in the nucleus. Functionally, transcription factor involved in positive regulation of genes involved in strategy II iron acquisition, including genes for mugineic acid (MA) family phytosiderophores biosynthesis, and genes involved in S-adenosylmethionine cycle and iron transport. May play a role in the regulation of iron deficiency response by promoting the nuclear localization of IRO2. Possesses transactivation activity in yeast. The sequence is that of Transcription factor BHLH156 from Oryza sativa subsp. japonica (Rice).